Consider the following 452-residue polypeptide: Phosphoglucosamine mutase (452 aa).

The active-site Phosphoserine intermediate is S104. S104, D245, D247, and D249 together coordinate Mg(2+). S104 carries the phosphoserine modification.

This sequence belongs to the phosphohexose mutase family. Requires Mg(2+) as cofactor. Activated by phosphorylation.

It carries out the reaction alpha-D-glucosamine 1-phosphate = D-glucosamine 6-phosphate. Functionally, catalyzes the conversion of glucosamine-6-phosphate to glucosamine-1-phosphate. The polypeptide is Phosphoglucosamine mutase (Gluconacetobacter diazotrophicus (strain ATCC 49037 / DSM 5601 / CCUG 37298 / CIP 103539 / LMG 7603 / PAl5)).